The primary structure comprises 478 residues: Cytochrome c-552 (478 aa).

The N-terminal stretch at 1–26 is a signal peptide; it reads MARKTLRARRFFSLIFPFFFMTSVYA. Position 94 (His-94) interacts with heme c. Positions 122, 125, and 126 each coordinate heme. Residues Cys-160, Cys-163, His-164, Cys-209, Cys-212, and His-213 each coordinate heme c. Ca(2+) is bound by residues Glu-215, Tyr-216, Lys-261, and Gln-263. Tyr-216 is a binding site for substrate. His-264 is a binding site for substrate. Residues His-275, Cys-282, Cys-285, His-286, His-301, Cys-314, Cys-317, His-318, and His-393 each coordinate heme c.

Belongs to the cytochrome c-552 family. Ca(2+) serves as cofactor. Requires heme c as cofactor.

The protein resides in the periplasm. The catalysed reaction is 6 Fe(III)-[cytochrome c] + NH4(+) + 2 H2O = 6 Fe(II)-[cytochrome c] + nitrite + 8 H(+). Its pathway is nitrogen metabolism; nitrate reduction (assimilation). In terms of biological role, catalyzes the reduction of nitrite to ammonia, consuming six electrons in the process. The chain is Cytochrome c-552 from Salmonella arizonae (strain ATCC BAA-731 / CDC346-86 / RSK2980).